Here is a 155-residue protein sequence, read N- to C-terminus: MGEMPFWKMKSLEEMSGAEWESLCDGCGLCCLNKLEDWDSSEIAWTSIRCTLLDGESCRCRDYDNRQATVPDCIQLTPEAVREISWLPPTCGYRLVSEGRDLYWWHPLVSGDPETVHAAGISVRGRTVPEDDIDIEDYEDYLVTWPLEVGREPAE.

The protein belongs to the UPF0260 family.

The chain is UPF0260 protein Smed_0627 from Sinorhizobium medicae (strain WSM419) (Ensifer medicae).